The primary structure comprises 220 residues: UPF0502 protein PSPPH_2577 (220 aa).

It belongs to the UPF0502 family.

This chain is UPF0502 protein PSPPH_2577, found in Pseudomonas savastanoi pv. phaseolicola (strain 1448A / Race 6) (Pseudomonas syringae pv. phaseolicola (strain 1448A / Race 6)).